The primary structure comprises 122 residues: Flagellar protein FliT (122 aa).

The interval 1 to 50 (MTSTVEFINRWQRIALLSQSLLELAQRGEWDLLLQQEVSYLQSIETVMEK) is required for homodimerization. Positions 60 to 98 (IQDMVAGYIKQTLDNEQLLKGLLQQRLDELSSLIGQSTR) are fliD binding.

It belongs to the FliT family. Homodimer. Interacts with FliD and FlhC.

The protein resides in the cytoplasm. The protein localises to the cytosol. Dual-function protein that regulates the transcription of class 2 flagellar operons and that also acts as an export chaperone for the filament-capping protein FliD. As a transcriptional regulator, acts as an anti-FlhDC factor; it directly binds FlhC, thus inhibiting the binding of the FlhC/FlhD complex to class 2 promoters, resulting in decreased expression of class 2 flagellar operons. As a chaperone, effects FliD transition to the membrane by preventing its premature polymerization, and by directing it to the export apparatus. This chain is Flagellar protein FliT, found in Salmonella gallinarum (strain 287/91 / NCTC 13346).